Consider the following 390-residue polypeptide: MNKTNPTIALVAGEVSGDILGAGLIRQLKAHYPNARFIGIAGPRMLAEGCETLVDMEELSVMGLAEILKHLPRLLKIRKNIIQTMLQEKPDVYIGIDAPDFNLDVELKLKANGIKTIHYVSPSVWAWRQNRIHKIAKATHQVLAFLPFEKAFYDKFNVPCRFIGHTMADAIPLKPNRAEACQTLQIDPAQRYLAILVGSRGSEVEFLAEPFLKTALLLKEQFPDLQFLVPLVNEKRRIQFEAIKAKITPNLDLHLIDGNARQAMIAADATLLASGTAALEAMLCKSPMVVGYRMKPLTYFLAKRLVKTDYISLPNLLANEMLVPEMIQEECTPELLAEKLSVYLSDDESAVKNRHVLIQHFTDLHQKIQCNADKQAAQAVIDLLEGTENV.

The protein belongs to the LpxB family.

It catalyses the reaction a lipid X + a UDP-2-N,3-O-bis[(3R)-3-hydroxyacyl]-alpha-D-glucosamine = a lipid A disaccharide + UDP + H(+). Its pathway is bacterial outer membrane biogenesis; LPS lipid A biosynthesis. Functionally, condensation of UDP-2,3-diacylglucosamine and 2,3-diacylglucosamine-1-phosphate to form lipid A disaccharide, a precursor of lipid A, a phosphorylated glycolipid that anchors the lipopolysaccharide to the outer membrane of the cell. The sequence is that of Lipid-A-disaccharide synthase from Haemophilus influenzae (strain PittEE).